A 4134-amino-acid chain; its full sequence is DNA-dependent protein kinase catalytic subunit (4134 aa).

HEAT repeat units follow at residues 900–937, 1000–1036, and 1050–1085; these read VIYLDVFLPRVTDLALSASDRQTKIAACELLHSIVAYM, QDTVTFLEAILSGIVDPVDSTLRDFCGQCVREFLKWS, and ANTKSLFKRLYSLALHPSAFKRLGAALAFNSIYREF. TPR repeat units lie at residues 1265–1305 and 1722–1755; these read YNTF…HDIH and PMSSDEFPKGTLKHNNYVDCTKKFLDALELSQSP. Phosphoserine; by autocatalysis is present on Ser2055. The TPR 3 repeat unit spans residues 2207–2240; sequence DEILANRLLEFLMKNAFHQKRAVFRHNLEIIKTV. The residue at position 2609 (Thr2609) is a Phosphothreonine; by autocatalysis. Over residues 2611 to 2629 the composition is skewed to polar residues; sequence ASQSTNRNSSQERSLSISG. The tract at residues 2611–2631 is disordered; that stretch reads ASQSTNRNSSQERSLSISGSV. Phosphoserine; by autocatalysis is present on Ser2612. 2 positions are modified to phosphothreonine; by autocatalysis: Thr2638 and Thr2647. Residues 2880–3545 enclose the FAT domain; sequence NVSTSCLASL…IYPFTISSES (666 aa). A PI3K/PI4K catalytic domain is found at 3728–4059; the sequence is FDERIMVLES…VSYVKRKLTG (332 aa). The G-loop stretch occupies residues 3734 to 3740; the sequence is VLESLRK. Residues 3925-3933 are catalytic loop; that stretch reads GIGDRHLSN. An activation loop region spans residues 3945-3970; that stretch reads GIDFGHAFGSATQFLPVPELMPFRLT. One can recognise an FATC domain in the interval 4102–4134; sequence DRLSEETQVRCLIDQATDPNLLGRVWEGWEPWM.

The protein belongs to the PI3/PI4-kinase family. DNA-PK is a heterotrimer of PRKDC and the Ku dimer (composed of XRCC6/Ku70 and XRCC5/Ku86). Component of the core long-range non-homologous end joining (NHEJ) complex (also named DNA-PK complex) composed of PRKDC, LIG4, XRCC4, XRCC6/Ku70, XRCC5/Ku86 and NHEJ1/XLF. Additional component of the NHEJ complex includes PAXX. Following autophosphorylation, PRKDC dissociates from DNA. Post-translationally, autophosphorylated at two clusters, the T2609 cluster and the S2056 cluster. Autophosphorylated on Ser-2055, Thr-2609, Thr-2638 and Thr-2647. Ser-2055 and Thr-2609 are DNA damage-inducible phosphorylation sites (inducible with ionizing radiation, IR) dephosphorylated by PPP5C. Autophosphorylation induces a conformational change that leads to remodeling of the DNA-PK complex, requisite for efficient end processing and DNA repair. Autophosphorylation in trans within DNA-PK complexes loaded on DNA ends leads to the dissociation of PRKDC from DNA and the transition into the short-range NHEJ complex. Autophosphorylation of the T2609 cluster is required for hematopoietic development and protein synthesis in erythrocytes precursors.

Its subcellular location is the nucleus. It localises to the nucleolus. It carries out the reaction L-seryl-[protein] + ATP = O-phospho-L-seryl-[protein] + ADP + H(+). It catalyses the reaction L-threonyl-[protein] + ATP = O-phospho-L-threonyl-[protein] + ADP + H(+). Its function is as follows. Serine/threonine-protein kinase that acts as a molecular sensor for DNA damage. Involved in DNA nonhomologous end joining (NHEJ) required for double-strand break (DSB) repair and V(D)J recombination. Must be bound to DNA to express its catalytic properties. Promotes processing of hairpin DNA structures in V(D)J recombination by activation of the hairpin endonuclease artemis (DCLRE1C). Recruited by XRCC5 and XRCC6 to DNA ends and is required to (1) protect and align broken ends of DNA, thereby preventing their degradation, (2) and sequester the DSB for repair by NHEJ. Acts as a scaffold protein to aid the localization of DNA repair proteins to the site of damage. The assembly of the DNA-PK complex at DNA ends is also required for the NHEJ ligation step. Found at the ends of chromosomes, suggesting a further role in the maintenance of telomeric stability and the prevention of chromosomal end fusion. As part of the DNA-PK complex, involved in the early steps of ribosome assembly by promoting the processing of precursor rRNA into mature 18S rRNA in the small-subunit processome. Recognizes the substrate consensus sequence [ST]-Q. Phosphorylates 'Ser-139' of histone variant H2AX, thereby regulating DNA damage response mechanism. This Gallus gallus (Chicken) protein is DNA-dependent protein kinase catalytic subunit (PRKDC).